Reading from the N-terminus, the 717-residue chain is Methionine--tRNA ligase (717 aa).

The 'HIGH' region motif lies at 19-29 (PYANGDLHVGH). Zn(2+)-binding residues include C150, C153, C162, and C166. Residues 356–360 (ALSTS) carry the 'KMSKS' region motif. T359 contacts ATP. The interval 573–603 (ERVEEASEASAEASNEGGEAAGDEVDDGDVD) is disordered. The span at 580–590 (EASAEASNEGG) shows a compositional bias: low complexity. Residues 593–603 (AGDEVDDGDVD) show a composition bias toward acidic residues. Positions 619–717 (DFEGVDMRVG…EDAPLGTRIK (99 aa)) constitute a tRNA-binding domain.

This sequence belongs to the class-I aminoacyl-tRNA synthetase family. MetG type 1 subfamily. Homodimer. Zn(2+) is required as a cofactor.

Its subcellular location is the cytoplasm. The catalysed reaction is tRNA(Met) + L-methionine + ATP = L-methionyl-tRNA(Met) + AMP + diphosphate. In terms of biological role, is required not only for elongation of protein synthesis but also for the initiation of all mRNA translation through initiator tRNA(fMet) aminoacylation. In Haloarcula marismortui (strain ATCC 43049 / DSM 3752 / JCM 8966 / VKM B-1809) (Halobacterium marismortui), this protein is Methionine--tRNA ligase.